The following is a 71-amino-acid chain: Translation initiation factor IF-1 (71 aa).

The region spanning 1 to 71 is the S1-like domain; sequence MAKDAIKLRA…TKGRITYRHK (71 aa).

Belongs to the IF-1 family. In terms of assembly, component of the 30S ribosomal translation pre-initiation complex which assembles on the 30S ribosome in the order IF-2 and IF-3, IF-1 and N-formylmethionyl-tRNA(fMet); mRNA recruitment can occur at any time during PIC assembly.

It is found in the cytoplasm. Functionally, one of the essential components for the initiation of protein synthesis. Stabilizes the binding of IF-2 and IF-3 on the 30S subunit to which N-formylmethionyl-tRNA(fMet) subsequently binds. Helps modulate mRNA selection, yielding the 30S pre-initiation complex (PIC). Upon addition of the 50S ribosomal subunit IF-1, IF-2 and IF-3 are released leaving the mature 70S translation initiation complex. This Mycoplasmopsis synoviae (strain 53) (Mycoplasma synoviae) protein is Translation initiation factor IF-1.